The sequence spans 276 residues: MSWLQVIVLAVVQGLTEFLPVSSSGHLAIVSRVFFDDDAGASFTAVTQLGTEVAVLVYFARDIGRIATAWFRGLRNPGRRDADYRLGWYVIIGTIPIGVIGLLLKDEIRTAARNLWAIAIALIVFSAVIAAAEYFGRQVRHVEQLTWRDGVIVGVAQCLALLPGVSRSGATISAGLFLGLDRELAARFGFLLAIPAVFASGLFSLPDAFAPVGEGMSATGPQLLVATVIAFVVGFAAVAWFLRFLVRHGMYWFVGYRVVLGVVVLILLSTGVVAAI.

The next 8 membrane-spanning stretches (helical) occupy residues 1–21, 39–59, 84–104, 115–135, 159–179, 190–210, 222–242, and 253–273; these read MSWLQVIVLAVVQGLTEFLPV, AGASFTAVTQLGTEVAVLVYF, YRLGWYVIIGTIPIGVIGLLL, LWAIAIALIVFSAVIAAAEYF, LALLPGVSRSGATISAGLFLG, FLLAIPAVFASGLFSLPDAFA, QLLVATVIAFVVGFAAVAWFL, and FVGYRVVLGVVVLILLSTGVV.

It belongs to the UppP family.

It is found in the cell membrane. The enzyme catalyses di-trans,octa-cis-undecaprenyl diphosphate + H2O = di-trans,octa-cis-undecaprenyl phosphate + phosphate + H(+). Functionally, catalyzes the dephosphorylation of undecaprenyl diphosphate (UPP). Confers resistance to bacitracin. The protein is Undecaprenyl-diphosphatase of Mycobacterium sp. (strain KMS).